Reading from the N-terminus, the 488-residue chain is Glutamyl-tRNA(Gln) amidotransferase subunit A (488 aa).

Residues Lys-79 and Ser-159 each act as charge relay system in the active site. Ser-183 serves as the catalytic Acyl-ester intermediate.

It belongs to the amidase family. GatA subfamily. Heterotrimer of A, B and C subunits.

It carries out the reaction L-glutamyl-tRNA(Gln) + L-glutamine + ATP + H2O = L-glutaminyl-tRNA(Gln) + L-glutamate + ADP + phosphate + H(+). In terms of biological role, allows the formation of correctly charged Gln-tRNA(Gln) through the transamidation of misacylated Glu-tRNA(Gln) in organisms which lack glutaminyl-tRNA synthetase. The reaction takes place in the presence of glutamine and ATP through an activated gamma-phospho-Glu-tRNA(Gln). The polypeptide is Glutamyl-tRNA(Gln) amidotransferase subunit A (Wolbachia pipientis subsp. Culex pipiens (strain wPip)).